The chain runs to 490 residues: ATP synthase subunit beta, chloroplastic (490 aa).

170–177 (GGAGVGKT) contributes to the ATP binding site.

This sequence belongs to the ATPase alpha/beta chains family. F-type ATPases have 2 components, CF(1) - the catalytic core - and CF(0) - the membrane proton channel. CF(1) has five subunits: alpha(3), beta(3), gamma(1), delta(1), epsilon(1). CF(0) has four main subunits: a(1), b(1), b'(1) and c(9-12).

It localises to the plastid. It is found in the chloroplast thylakoid membrane. It catalyses the reaction ATP + H2O + 4 H(+)(in) = ADP + phosphate + 5 H(+)(out). In terms of biological role, produces ATP from ADP in the presence of a proton gradient across the membrane. The catalytic sites are hosted primarily by the beta subunits. The sequence is that of ATP synthase subunit beta, chloroplastic from Cressa truxillensis (Spreading alkaliweed).